A 293-amino-acid polypeptide reads, in one-letter code: Probable 2-(5''-triphosphoribosyl)-3'-dephosphocoenzyme-A synthase (293 aa).

It belongs to the CitG/MdcB family.

It carries out the reaction 3'-dephospho-CoA + ATP = 2'-(5''-triphospho-alpha-D-ribosyl)-3'-dephospho-CoA + adenine. Its function is as follows. Involved in the formation of 2-(5''-phosphoribosyl)-3'-dephosphocoenzyme-A, the prosthetic group of the acyl-carrier protein of the malonate decarboxylase. In Pseudomonas aeruginosa (strain UCBPP-PA14), this protein is Probable 2-(5''-triphosphoribosyl)-3'-dephosphocoenzyme-A synthase.